The chain runs to 198 residues: 7-methyl-GTP pyrophosphatase (198 aa).

The active-site Proton acceptor is the Asp-75.

The protein belongs to the Maf family. YceF subfamily. Requires a divalent metal cation as cofactor.

It is found in the cytoplasm. It carries out the reaction N(7)-methyl-GTP + H2O = N(7)-methyl-GMP + diphosphate + H(+). Nucleoside triphosphate pyrophosphatase that hydrolyzes 7-methyl-GTP (m(7)GTP). May have a dual role in cell division arrest and in preventing the incorporation of modified nucleotides into cellular nucleic acids. The sequence is that of 7-methyl-GTP pyrophosphatase from Bartonella henselae (strain ATCC 49882 / DSM 28221 / CCUG 30454 / Houston 1) (Rochalimaea henselae).